The chain runs to 652 residues: DNA mismatch repair protein MutL (652 aa).

2 disordered regions span residues 357-377 and 425-457; these read LGAN…NYPS and PDKG…NSTD. The segment covering 365 to 375 has biased composition (polar residues); it reads SHSSNTPTLNY.

It belongs to the DNA mismatch repair MutL/HexB family.

In terms of biological role, this protein is involved in the repair of mismatches in DNA. It is required for dam-dependent methyl-directed DNA mismatch repair. May act as a 'molecular matchmaker', a protein that promotes the formation of a stable complex between two or more DNA-binding proteins in an ATP-dependent manner without itself being part of a final effector complex. In Colwellia psychrerythraea (strain 34H / ATCC BAA-681) (Vibrio psychroerythus), this protein is DNA mismatch repair protein MutL.